A 466-amino-acid polypeptide reads, in one-letter code: MYLTIWLVPLLAVGTWGQKFNRFCHYNSWALSRNPQHGLVPEDIDPFLCTHMILGFAEIDESGLRLKDPNHYQQQYLYQRIVRLRRINPRLNMILSVGGWDKSQEGYSKLVSSRENIIFFTKWIITYLRRHDFDGLDLDWEYPTFKGSPMVDKKKFVDLVENLAYEFDIEEIPDIKWKLTLTWTADPLESVRTSAYDIKGIASKVHYVNLKMYDFHGHWDDPLRVNHHSPLTSSNSPRNVNELAKTWVKAGVRIEKLILGIPFFGRSFTLKTANMSAPGSPAVGPGSDFGDGIPIHNLCHIIRGGTKELYLPEKKVPYIVSGSEWIGYDNPRSVMEKAQLVFNNALAGVMIYSLDMDDHHGTCGKKWPMMMAVIHGLNAYMEYIDSKHKSLELTYNKKILRARVSLRNYRRRNQQGKVAEMEQRIRNLEQELQQSMGNMAYERQQAQAMLNRGVSLPPIEQQSWSW.

An N-terminal signal peptide occupies residues 1–17 (MYLTIWLVPLLAVGTWG). The GH18 domain maps to 20-380 (FNRFCHYNSW…MAVIHGLNAY (361 aa)). A disulfide bridge links C24 with C49. E141 functions as the Proton donor in the catalytic mechanism. Residues 395–447 (YNKKILRARVSLRNYRRRNQQGKVAEMEQRIRNLEQELQQSMGNMAYERQQAQ) adopt a coiled-coil conformation.

Belongs to the glycosyl hydrolase 18 family. As to expression, prismatic layer of shell (at protein level). Expressed primarily in the mantle with highest level in the mantle edge and lower level in the mantle pallium.

The protein localises to the secreted. It catalyses the reaction Random endo-hydrolysis of N-acetyl-beta-D-glucosaminide (1-&gt;4)-beta-linkages in chitin and chitodextrins.. In Margaritifera margaritifera (Freshwater pearl mussel), this protein is Putative chitinase 2.